The chain runs to 1255 residues: Kinesin-related protein 7 (1255 aa).

A disordered region spans residues 1–26 (MESPVVEGNSGEVATPTLPQPPTPVS). The 322-residue stretch at 28 to 349 (NIRVVCRVRP…LQFGTRAKTI (322 aa)) folds into the Kinesin motor domain. 107-114 (GQTASGKT) serves as a coordination point for ATP. Composition is skewed to low complexity over residues 454–491 (NNNN…QQEN), 545–563 (NNNN…DSDG), and 583–603 (HNIN…NSNS). 6 disordered regions span residues 454-503 (NNNN…NSSF), 530-564 (GNIS…SDGY), 579-628 (DLND…MDVN), 661-686 (ENEQ…SNAT), 795-864 (EEGS…TKSI), and 915-934 (ISIK…TSIK). Over residues 608–628 (VSTSYITSSPNLSPSKSMDVN) the composition is skewed to polar residues. Residues 813–834 (GDDDDEENEDNENEDVIVDSDE) show a composition bias toward acidic residues. The span at 915–932 (ISIKSNKEPSPSSSTTTS) shows a compositional bias: low complexity. Residues 945 to 965 (IIFTIILTITLVSSSLLCLYL) form a helical membrane-spanning segment. A coiled-coil region spans residues 1088–1223 (NYITKIDQLS…QELEDAPIAL (136 aa)).

Belongs to the TRAFAC class myosin-kinesin ATPase superfamily. Kinesin family.

The protein resides in the nucleus membrane. Its subcellular location is the cytoplasm. It localises to the cytoskeleton. In terms of biological role, microtubule-associated force-producing protein that plays a role in organelle transport. Its motor activity is directed toward the microtubule's plus end. May be involved in cell motility or cell differentiation during prestalk formation. The sequence is that of Kinesin-related protein 7 (kif7) from Dictyostelium discoideum (Social amoeba).